The sequence spans 511 residues: Maturase K (511 aa).

Belongs to the intron maturase 2 family. MatK subfamily.

It localises to the plastid. It is found in the chloroplast. Functionally, usually encoded in the trnK tRNA gene intron. Probably assists in splicing its own and other chloroplast group II introns. This chain is Maturase K, found in Melica altissima (Siberian melic grass).